A 331-amino-acid polypeptide reads, in one-letter code: Holliday junction branch migration complex subunit RuvB (331 aa).

Positions 4–182 (KDILQSSECI…FGIPMHLEFY (179 aa)) are large ATPase domain (RuvB-L). Residues arginine 22, glycine 63, lysine 66, threonine 67, threonine 68, 129 to 131 (EDF), arginine 172, tyrosine 182, and arginine 219 each bind ATP. A Mg(2+)-binding site is contributed by threonine 67. The tract at residues 183 to 253 (STEELTKVIK…FADQALLRLG (71 aa)) is small ATPAse domain (RuvB-S). The head domain (RuvB-H) stretch occupies residues 256–331 (KLGLDRQDIK…SYLNEQTYNM (76 aa)). Residues arginine 309 and arginine 314 each contribute to the DNA site.

The protein belongs to the RuvB family. Homohexamer. Forms an RuvA(8)-RuvB(12)-Holliday junction (HJ) complex. HJ DNA is sandwiched between 2 RuvA tetramers; dsDNA enters through RuvA and exits via RuvB. An RuvB hexamer assembles on each DNA strand where it exits the tetramer. Each RuvB hexamer is contacted by two RuvA subunits (via domain III) on 2 adjacent RuvB subunits; this complex drives branch migration. In the full resolvosome a probable DNA-RuvA(4)-RuvB(12)-RuvC(2) complex forms which resolves the HJ.

The protein localises to the cytoplasm. The enzyme catalyses ATP + H2O = ADP + phosphate + H(+). Its function is as follows. The RuvA-RuvB-RuvC complex processes Holliday junction (HJ) DNA during genetic recombination and DNA repair, while the RuvA-RuvB complex plays an important role in the rescue of blocked DNA replication forks via replication fork reversal (RFR). RuvA specifically binds to HJ cruciform DNA, conferring on it an open structure. The RuvB hexamer acts as an ATP-dependent pump, pulling dsDNA into and through the RuvAB complex. RuvB forms 2 homohexamers on either side of HJ DNA bound by 1 or 2 RuvA tetramers; 4 subunits per hexamer contact DNA at a time. Coordinated motions by a converter formed by DNA-disengaged RuvB subunits stimulates ATP hydrolysis and nucleotide exchange. Immobilization of the converter enables RuvB to convert the ATP-contained energy into a lever motion, pulling 2 nucleotides of DNA out of the RuvA tetramer per ATP hydrolyzed, thus driving DNA branch migration. The RuvB motors rotate together with the DNA substrate, which together with the progressing nucleotide cycle form the mechanistic basis for DNA recombination by continuous HJ branch migration. Branch migration allows RuvC to scan DNA until it finds its consensus sequence, where it cleaves and resolves cruciform DNA. In Ehrlichia ruminantium (strain Gardel), this protein is Holliday junction branch migration complex subunit RuvB.